A 796-amino-acid chain; its full sequence is Potassium transporter 10 (796 aa).

The tract at residues 1-30 (MAGRVESSIGGGEIDEEGDERGSMWDLDQS) is disordered. The Cytoplasmic portion of the chain corresponds to 1–58 (MAGRVESSIGGGEIDEEGDERGSMWDLDQSLDQPMDEEAGRLRNMYREKKFSAFLLLQ). The helical transmembrane segment at 59-79 (LSFQSLGVVYGDLGTSPLYVF) threads the bilayer. Residues 80-95 (YNTFPRGIKDPEDIIG) lie on the Extracellular side of the membrane. A helical membrane pass occupies residues 96–116 (ALSLIIYSLTLIPLLKYVFVV). Residues 117-184 (CKANDNGQGG…ENGTSRKNAL (68 aa)) are Cytoplasmic-facing. A helical transmembrane segment spans residues 185 to 205 (LILVLVGTCMVIGDGILTPAI). At 206–217 (SVLSAAGGLRVN) the chain is on the extracellular side. The helical transmembrane segment at 218–238 (LPHINNGIVVVVAVVILVSLF) threads the bilayer. Over 239–248 (SVQHYGTDRV) the chain is Cytoplasmic. The chain crosses the membrane as a helical span at residues 249 to 269 (GWLFAPIVFLWFLFIASIGMF). The Extracellular segment spans residues 270 to 298 (NIWKHDPSVLKAFSPVYIFRYFKRGGQDR). A helical transmembrane segment spans residues 299–319 (WTSLGGIMLSITGIEALFADL). Topologically, residues 320-321 (SH) are cytoplasmic. The chain crosses the membrane as a helical span at residues 322–342 (FPVSAVQFAFTVIVFPCLLLA). At 343-368 (YSGQAAYLRKYPHHVEDAFYQSIPKR) the chain is on the extracellular side. The chain crosses the membrane as a helical span at residues 369-389 (VYWPMFIIATAAAIVASQATI). Over 390-420 (SATFSLIKQALAHGCFPRVKVVHTSRKFLGQ) the chain is Cytoplasmic. A helical membrane pass occupies residues 421–441 (IYVPDINWILMILCIAVTAGF). Residues 442–453 (KNQNQIGNAYGT) are Extracellular-facing. Residues 454–474 (AVVIVMLVTTLLMMLIMILVW) form a helical membrane-spanning segment. Over 475–480 (RCHWVL) the chain is Cytoplasmic. Residues 481-501 (VLLFTLLSLVVECTYFSAVLF) form a helical membrane-spanning segment. Topologically, residues 502–505 (KVNQ) are extracellular. Residues 506 to 526 (GGWVPLVIAAAFLVIMYVWHY) form a helical membrane-spanning segment. At 527–796 (GTLKRYEFEM…LLNVGQIFYV (270 aa)) the chain is on the cytoplasmic side.

This sequence belongs to the HAK/KUP transporter (TC 2.A.72.3) family.

Its subcellular location is the cell membrane. Functionally, putative potassium transporter. This is Potassium transporter 10 (POT10) from Arabidopsis thaliana (Mouse-ear cress).